An 886-amino-acid chain; its full sequence is Coatomer subunit gamma (886 aa).

HEAT repeat units lie at residues Val-66–Glu-103, Arg-288–Met-325, Val-327–Glu-359, Ser-360–Leu-397, and Ser-472–Ser-509. The tract at residues Ser-592–Ala-613 is disordered.

Belongs to the COPG family. Oligomeric complex that consists of at least the alpha, beta, beta', gamma, delta, epsilon and zeta subunits.

It localises to the cytoplasm. Its subcellular location is the golgi apparatus membrane. The protein localises to the cytoplasmic vesicle. The protein resides in the COPI-coated vesicle membrane. Its function is as follows. The coatomer is a cytosolic protein complex that binds to dilysine motifs and reversibly associates with Golgi non-clathrin-coated vesicles, which further mediate biosynthetic protein transport from the ER, via the Golgi up to the trans Golgi network. Coatomer complex is required for budding from Golgi membranes, and is essential for the retrograde Golgi-to-ER transport of dilysine-tagged proteins. The chain is Coatomer subunit gamma from Arabidopsis thaliana (Mouse-ear cress).